Reading from the N-terminus, the 321-residue chain is Ferredoxin--NADP reductase (321 aa).

FAD contacts are provided by Asp34, Gln42, Tyr47, Val87, Phe119, Asp278, and Thr319.

It belongs to the ferredoxin--NADP reductase type 2 family. In terms of assembly, homodimer. It depends on FAD as a cofactor.

It catalyses the reaction 2 reduced [2Fe-2S]-[ferredoxin] + NADP(+) + H(+) = 2 oxidized [2Fe-2S]-[ferredoxin] + NADPH. The polypeptide is Ferredoxin--NADP reductase (Streptococcus pneumoniae serotype 4 (strain ATCC BAA-334 / TIGR4)).